The following is a 246-amino-acid chain: E3 ubiquitin-protein ligase MARCHF2 (246 aa).

The RING-CH-type zinc finger occupies 56 to 116 (GTQSDGPICR…ELCHTEFAVE (61 aa)). Zn(2+)-binding residues include Cys-64, Cys-67, Cys-80, Cys-82, His-90, Cys-93, Cys-106, and Cys-109. A run of 2 helical transmembrane segments spans residues 138-158 (LFCDMVCFLFITPLAAISGWL) and 175-195 (AVGLIALTIALFTIYVLWTLV).

Its subcellular location is the endoplasmic reticulum membrane. The protein resides in the lysosome membrane. The protein localises to the endosome membrane. The enzyme catalyses S-ubiquitinyl-[E2 ubiquitin-conjugating enzyme]-L-cysteine + [acceptor protein]-L-lysine = [E2 ubiquitin-conjugating enzyme]-L-cysteine + N(6)-ubiquitinyl-[acceptor protein]-L-lysine.. It functions in the pathway protein modification; protein ubiquitination. Functionally, E3 ubiquitin-protein ligase which may be involved in endosomal trafficking. E3 ubiquitin ligases accept ubiquitin from an E2 ubiquitin-conjugating enzyme in the form of a thioester and then directly transfer the ubiquitin to targeted substrates. This is E3 ubiquitin-protein ligase MARCHF2 (marchf2) from Xenopus tropicalis (Western clawed frog).